The sequence spans 148 residues: Deoxyuridine 5'-triphosphate nucleotidohydrolase (148 aa).

Residues 67-69, asparagine 80, 84-86, and methionine 94 contribute to the substrate site; these read RSG and LID.

Belongs to the dUTPase family. The cofactor is Mg(2+).

It carries out the reaction dUTP + H2O = dUMP + diphosphate + H(+). It participates in pyrimidine metabolism; dUMP biosynthesis; dUMP from dCTP (dUTP route): step 2/2. This enzyme is involved in nucleotide metabolism: it produces dUMP, the immediate precursor of thymidine nucleotides and it decreases the intracellular concentration of dUTP so that uracil cannot be incorporated into DNA. The polypeptide is Deoxyuridine 5'-triphosphate nucleotidohydrolase (Burkholderia multivorans (strain ATCC 17616 / 249)).